Here is a 188-residue protein sequence, read N- to C-terminus: E3 ubiquitin-protein ligase RNF183 (188 aa).

Topologically, residues 1-157 (MAEQQGREPE…RECFRNPHFR (157 aa)) are cytoplasmic. Residues 11–58 (CPVCWNPFNNTFHTPKVLDCCHSFCVECLAHISLVTPTRRRLLCPLCR) form an RING-type zinc finger. Residues 158–178 (IFAYMMAVILCGTVLFIFSIF) traverse the membrane as a helical; Anchor for type IV membrane protein segment. The Lumenal portion of the chain corresponds to 179–188 (CTRRFFWGVG).

In terms of assembly, interacts with FATE1. Interacts with SEC16A. Interacts with BCL2L1. Post-translationally, autoubiquitinated (in vitro).

The protein localises to the endoplasmic reticulum membrane. The protein resides in the endoplasmic reticulum. It is found in the golgi apparatus. It localises to the cis-Golgi network membrane. Its subcellular location is the lysosome. The enzyme catalyses S-ubiquitinyl-[E2 ubiquitin-conjugating enzyme]-L-cysteine + [acceptor protein]-L-lysine = [E2 ubiquitin-conjugating enzyme]-L-cysteine + N(6)-ubiquitinyl-[acceptor protein]-L-lysine.. It functions in the pathway protein modification; protein ubiquitination. In terms of biological role, acts as an E3 ubiquitin ligase catalyzing the covalent attachment of ubiquitin moieties onto substrate proteins. Triggers apoptosis in response to prolonged ER stress by mediating the polyubiquitination and subsequent proteasomal degradation of BCL2L1. May collaborate with FATE1 to restrain BIK protein levels thus regulating apoptotic signaling. The polypeptide is E3 ubiquitin-protein ligase RNF183 (RNF183) (Bos taurus (Bovine)).